Here is a 28-residue protein sequence, read N- to C-terminus: DDCTTYCYGVHCCPPAFKCAASGCVRNN.

Disulfide bonds link Cys-3–Cys-13, Cys-7–Cys-19, and Cys-12–Cys-24.

In terms of tissue distribution, expressed by the venom duct.

Its subcellular location is the secreted. The chain is Conotoxin Cl6a from Californiconus californicus (California cone).